Consider the following 303-residue polypeptide: Putative CRISPR-associated endonuclease Cas1 2 (303 aa).

E149 provides a ligand contact to Mn(2+).

It belongs to the CRISPR-associated endonuclease Cas1 family. Homodimer, forms a heterotetramer with a Cas2 homodimer. It depends on Mg(2+) as a cofactor. Mn(2+) is required as a cofactor.

Functionally, CRISPR (clustered regularly interspaced short palindromic repeat), is an adaptive immune system that provides protection against mobile genetic elements (viruses, transposable elements and conjugative plasmids). CRISPR clusters contain sequences complementary to antecedent mobile elements and target invading nucleic acids. CRISPR clusters are transcribed and processed into CRISPR RNA (crRNA). Acts as a dsDNA endonuclease. Involved in the integration of spacer DNA into the CRISPR cassette. This chain is Putative CRISPR-associated endonuclease Cas1 2, found in Methanospirillum hungatei JF-1 (strain ATCC 27890 / DSM 864 / NBRC 100397 / JF-1).